The sequence spans 193 residues: Cysteine and glycine-rich protein 2 (193 aa).

The LIM zinc-binding 1 domain maps to 10 to 61 (CGACGRTVYHAEEVQCDGRTFHRCCFLCMVCRKNLDSTTVAIHDEEIYCKSC). A Nuclear localization signal motif is present at residues 64–69 (KKYGPK). Lysine 91 participates in a covalent cross-link: Glycyl lysine isopeptide (Lys-Gly) (interchain with G-Cter in SUMO2). N6-acetyllysine occurs at positions 112 and 131. Positions 119-170 (CSRCGDSVYAAEKIIGAGKPWHKNCFRCAKCGKSLESTTLTEKEGEIYCKGC) constitute an LIM zinc-binding 2 domain. At lysine 137 the chain carries N6-acetyllysine; alternate. Lysine 137 is subject to N6-succinyllysine; alternate. Lysine 161 carries the N6-acetyllysine modification.

As to quaternary structure, interacts with KAT14. The LIM domain 1 is necessary and sufficient for this interaction. Interacts with GLRX3. Highly expressed in the aorta; weakly found in the kidney, thymus, and intestine. Barely detectable in brain, testis, esophagus, lung, liver, aortic adventitia, vena cava, or uterus; not present in heart and skeletal muscle.

It is found in the nucleus. Drastically down-regulated in response to PDGF-BB or cell injury, that promote smooth muscle cell proliferation and dedifferentiation. Seems to play a role in the development of the embryonic vascular system. The protein is Cysteine and glycine-rich protein 2 (Csrp2) of Rattus norvegicus (Rat).